The primary structure comprises 273 residues: Proteasome subunit alpha (273 aa).

The tract at residues 231–273 is disordered; it reads DDGAAGQPPSSSDTDTSAAEARKPTASAGSADLEGPEPERPDS. The span at 238-249 shows a compositional bias: low complexity; it reads PPSSSDTDTSAA.

Belongs to the peptidase T1A family. In terms of assembly, the 20S proteasome core is composed of 14 alpha and 14 beta subunits that assemble into four stacked heptameric rings, resulting in a barrel-shaped structure. The two inner rings, each composed of seven catalytic beta subunits, are sandwiched by two outer rings, each composed of seven alpha subunits. The catalytic chamber with the active sites is on the inside of the barrel. Has a gated structure, the ends of the cylinder being occluded by the N-termini of the alpha-subunits. Is capped by the proteasome-associated ATPase, ARC.

The protein resides in the cytoplasm. Its pathway is protein degradation; proteasomal Pup-dependent pathway. With respect to regulation, the formation of the proteasomal ATPase ARC-20S proteasome complex, likely via the docking of the C-termini of ARC into the intersubunit pockets in the alpha-rings, may trigger opening of the gate for substrate entry. Interconversion between the open-gate and close-gate conformations leads to a dynamic regulation of the 20S proteasome proteolysis activity. Its function is as follows. Component of the proteasome core, a large protease complex with broad specificity involved in protein degradation. In Salinispora arenicola (strain CNS-205), this protein is Proteasome subunit alpha.